The primary structure comprises 379 residues: 1-deoxy-D-xylulose 5-phosphate reductoisomerase (379 aa).

The NADPH site is built by threonine 10, glycine 11, serine 12, isoleucine 13, arginine 38, asparagine 39, and asparagine 121. Lysine 122 contributes to the 1-deoxy-D-xylulose 5-phosphate binding site. Glutamate 123 lines the NADPH pocket. Aspartate 147 contributes to the Mn(2+) binding site. The 1-deoxy-D-xylulose 5-phosphate site is built by serine 148, glutamate 149, serine 173, and histidine 196. Glutamate 149 lines the Mn(2+) pocket. Glycine 202 contacts NADPH. Residues serine 209, asparagine 214, lysine 215, and glutamate 218 each coordinate 1-deoxy-D-xylulose 5-phosphate. Residue glutamate 218 participates in Mn(2+) binding.

It belongs to the DXR family. The cofactor is Mg(2+). Mn(2+) serves as cofactor.

It catalyses the reaction 2-C-methyl-D-erythritol 4-phosphate + NADP(+) = 1-deoxy-D-xylulose 5-phosphate + NADPH + H(+). It participates in isoprenoid biosynthesis; isopentenyl diphosphate biosynthesis via DXP pathway; isopentenyl diphosphate from 1-deoxy-D-xylulose 5-phosphate: step 1/6. Functionally, catalyzes the NADPH-dependent rearrangement and reduction of 1-deoxy-D-xylulose-5-phosphate (DXP) to 2-C-methyl-D-erythritol 4-phosphate (MEP). In Chlamydia trachomatis serovar A (strain ATCC VR-571B / DSM 19440 / HAR-13), this protein is 1-deoxy-D-xylulose 5-phosphate reductoisomerase.